Reading from the N-terminus, the 73-residue chain is uncharacterized protein (73 aa).

This is an uncharacterized protein from Treponema pallidum (strain Nichols).